The primary structure comprises 99 residues: Nucleoid-associated protein SZO_16661 (99 aa).

Belongs to the YbaB/EbfC family. As to quaternary structure, homodimer.

Its subcellular location is the cytoplasm. It localises to the nucleoid. Binds to DNA and alters its conformation. May be involved in regulation of gene expression, nucleoid organization and DNA protection. The chain is Nucleoid-associated protein SZO_16661 from Streptococcus equi subsp. zooepidemicus (strain H70).